The chain runs to 191 residues: MSLISRLRAVVAGDDFLDSDFDELDYETSDDFENFNRGKKEGSTEMATISQANPFDGRSGFPPSNVIGMPGISTNDSEVSLMEPRSFDEMPRVIQALRERKTVILNLTMMEPDQAQRAVDFVAGGTFAIDGHQERVGESIFLFAPSCVTVTNSFQEEASPSNMSNKGNDLISKETSPAPEPAWGETVATAL.

Residues 156-167 are compositionally biased toward polar residues; that stretch reads EEASPSNMSNKG. Residues 156–191 form a disordered region; sequence EEASPSNMSNKGNDLISKETSPAPEPAWGETVATAL.

This sequence belongs to the SepF family. Homodimer. Interacts with FtsZ.

The protein localises to the cytoplasm. Functionally, cell division protein that is part of the divisome complex and is recruited early to the Z-ring. Probably stimulates Z-ring formation, perhaps through the cross-linking of FtsZ protofilaments. Its function overlaps with FtsA. The polypeptide is Cell division protein SepF (Prochlorococcus marinus (strain NATL2A)).